We begin with the raw amino-acid sequence, 807 residues long: Glycerol-3-phosphate acyltransferase (807 aa).

Positions 308–313 match the HXXXXD motif motif; the sequence is CHRSHM.

It belongs to the GPAT/DAPAT family.

It is found in the cell inner membrane. The enzyme catalyses sn-glycerol 3-phosphate + an acyl-CoA = a 1-acyl-sn-glycero-3-phosphate + CoA. The protein operates within phospholipid metabolism; CDP-diacylglycerol biosynthesis; CDP-diacylglycerol from sn-glycerol 3-phosphate: step 1/3. The chain is Glycerol-3-phosphate acyltransferase from Shewanella pealeana (strain ATCC 700345 / ANG-SQ1).